Consider the following 273-residue polypeptide: Ribonuclease Z (273 aa).

5 residues coordinate Zn(2+): His-61, His-63, His-146, Asp-169, and His-233.

The protein belongs to the RNase Z family. As to quaternary structure, homodimer. Zn(2+) is required as a cofactor.

It catalyses the reaction Endonucleolytic cleavage of RNA, removing extra 3' nucleotides from tRNA precursor, generating 3' termini of tRNAs. A 3'-hydroxy group is left at the tRNA terminus and a 5'-phosphoryl group is left at the trailer molecule.. In terms of biological role, zinc phosphodiesterase, which displays some tRNA 3'-processing endonuclease activity. Probably involved in tRNA maturation, by removing a 3'-trailer from precursor tRNA. The polypeptide is Ribonuclease Z (Mycobacterium tuberculosis (strain ATCC 25177 / H37Ra)).